The following is a 29-amino-acid chain: MDIITFGWVAVAAFFALSIAFVVWGRNGM.

The chain crosses the membrane as a helical span at residues 3 to 23 (IITFGWVAVAAFFALSIAFVV).

It belongs to the PetN family. As to quaternary structure, the 4 large subunits of the cytochrome b6-f complex are cytochrome b6, subunit IV (17 kDa polypeptide, PetD), cytochrome f and the Rieske protein, while the 4 small subunits are PetG, PetL, PetM and PetN. The complex functions as a dimer.

Its subcellular location is the cellular thylakoid membrane. In terms of biological role, component of the cytochrome b6-f complex, which mediates electron transfer between photosystem II (PSII) and photosystem I (PSI), cyclic electron flow around PSI, and state transitions. The chain is Cytochrome b6-f complex subunit 8 from Synechococcus sp. (strain JA-3-3Ab) (Cyanobacteria bacterium Yellowstone A-Prime).